The sequence spans 366 residues: BIIDXI-like protein At5g11420 (366 aa).

A signal peptide spans 1 to 22 (MKGGSLSFLFVLLIATITSVIC). N-linked (GlcNAc...) asparagine glycosylation is found at asparagine 98, asparagine 122, and asparagine 209.

As to quaternary structure, interacts with PME3.

The protein localises to the secreted. The protein resides in the cell wall. Its function is as follows. Together with BIIDXI, acts as a positive regulator of PME3 activity during several developmental processes, including seed germination and endosperm (testa) rupture at the micropyle, probably by modulating the pectin status in cell walls. The protein is BIIDXI-like protein At5g11420 of Arabidopsis thaliana (Mouse-ear cress).